Reading from the N-terminus, the 510-residue chain is Bifunctional pantoate ligase/cytidylate kinase (510 aa).

A pantoate--beta-alanine ligase region spans residues 1 to 276 (MNKIIIRKTE…CGKTRLIDHV (276 aa)). ATP is bound at residue 29-36 (MGNLHDGH). H36 (proton donor) is an active-site residue. Residue Q61 participates in (R)-pantoate binding. Beta-alanine is bound at residue Q61. Residue 150–153 (GEKD) participates in ATP binding. Residue Q156 coordinates (R)-pantoate. 187 to 190 (FSSR) contributes to the ATP binding site. The tract at residues 277–510 (FLMKRKPIIA…LNIPKEIQLE (234 aa)) is cytidylate kinase.

It in the N-terminal section; belongs to the pantothenate synthetase family. The protein in the C-terminal section; belongs to the cytidylate kinase family. Type 1 subfamily.

The protein resides in the cytoplasm. It catalyses the reaction (R)-pantoate + beta-alanine + ATP = (R)-pantothenate + AMP + diphosphate + H(+). The enzyme catalyses CMP + ATP = CDP + ADP. It carries out the reaction dCMP + ATP = dCDP + ADP. Its pathway is cofactor biosynthesis; (R)-pantothenate biosynthesis; (R)-pantothenate from (R)-pantoate and beta-alanine: step 1/1. Its function is as follows. Catalyzes the condensation of pantoate with beta-alanine in an ATP-dependent reaction via a pantoyl-adenylate intermediate. Catalyzes the transfer of a phosphate group from ATP to either CMP or dCMP to form CDP or dCDP and ADP, respectively. The protein is Bifunctional pantoate ligase/cytidylate kinase of Prochlorococcus marinus subsp. pastoris (strain CCMP1986 / NIES-2087 / MED4).